A 263-amino-acid polypeptide reads, in one-letter code: Small ribosomal subunit protein eS1 (263 aa).

The tract at residues 235 to 263 (HGEGGGGKGEAGDKSERPEGYEPPVQESV) is disordered. The span at 244–254 (EAGDKSERPEG) shows a compositional bias: basic and acidic residues.

It belongs to the eukaryotic ribosomal protein eS1 family. In terms of assembly, component of the small ribosomal subunit. Mature ribosomes consist of a small (40S) and a large (60S) subunit. The 40S subunit contains about 33 different proteins and 1 molecule of RNA (18S). The 60S subunit contains about 49 different proteins and 3 molecules of RNA (28S, 5.8S and 5S).

Its subcellular location is the cytoplasm. The chain is Small ribosomal subunit protein eS1 from Bombyx mori (Silk moth).